We begin with the raw amino-acid sequence, 253 residues long: uncharacterized protein (253 aa).

A BON 1 domain is found at 4 to 73 (FGKSTADRVK…IDVSGVTVLQ (70 aa)). The span at 79–93 (AAQTAPTTPAQTSPS) shows a compositional bias: low complexity. The disordered stretch occupies residues 79 to 105 (AAQTAPTTPAQTSPSVQDSPSTPVQMP). The region spanning 119 to 188 (DTSRIAKAVL…VDISGLRVAQ (70 aa)) is the BON 2 domain. Positions 204–251 (TVYTVKPGDSLSKIAEHYYGDQMEYKKIAHYNNISNPDLIQPGQKLRI) constitute a LysM domain.

This is an uncharacterized protein from Deinococcus radiodurans (strain ATCC 13939 / DSM 20539 / JCM 16871 / CCUG 27074 / LMG 4051 / NBRC 15346 / NCIMB 9279 / VKM B-1422 / R1).